The following is a 292-amino-acid chain: Phosphatidylglycerol--prolipoprotein diacylglyceryl transferase (292 aa).

Helical transmembrane passes span 25-45, 70-90, 101-121, 138-158, 193-213, and 255-275; these read IALH…WWYA, FVVW…VLVW, AIIA…GIII, FDIV…CNFI, FMEG…FKAL, and GFTY…YLLL. Position 153 (arginine 153) interacts with a 1,2-diacyl-sn-glycero-3-phospho-(1'-sn-glycerol).

Belongs to the Lgt family.

Its subcellular location is the cell inner membrane. It catalyses the reaction L-cysteinyl-[prolipoprotein] + a 1,2-diacyl-sn-glycero-3-phospho-(1'-sn-glycerol) = an S-1,2-diacyl-sn-glyceryl-L-cysteinyl-[prolipoprotein] + sn-glycerol 1-phosphate + H(+). It functions in the pathway protein modification; lipoprotein biosynthesis (diacylglyceryl transfer). Catalyzes the transfer of the diacylglyceryl group from phosphatidylglycerol to the sulfhydryl group of the N-terminal cysteine of a prolipoprotein, the first step in the formation of mature lipoproteins. The chain is Phosphatidylglycerol--prolipoprotein diacylglyceryl transferase from Bartonella quintana (strain Toulouse) (Rochalimaea quintana).